The chain runs to 119 residues: Protein Wnt-4 (119 aa).

Residue Ser1 is the site of O-palmitoleoyl serine; by PORCN attachment. 2 disulfides stabilise this stretch: Cys69-Cys100 and Cys85-Cys95. The N-linked (GlcNAc...) asparagine glycan is linked to Asn86.

It belongs to the Wnt family. Post-translationally, palmitoleoylation is required for efficient binding to frizzled receptors. Depalmitoleoylation leads to Wnt signaling pathway inhibition.

The protein resides in the secreted. Its subcellular location is the extracellular space. It is found in the extracellular matrix. Ligand for members of the frizzled family of seven transmembrane receptors. Plays an important role in embryonic development. The chain is Protein Wnt-4 (WNT-4) from Plestiodon skiltonianus (Western skink).